The following is a 246-amino-acid chain: Phosphonates import ATP-binding protein PhnC (246 aa).

One can recognise an ABC transporter domain in the interval 2–246 (IKFENVSKIY…ILDEVYRKEA (245 aa)). Residue 35–42 (GTSGAGKS) participates in ATP binding.

It belongs to the ABC transporter superfamily. Phosphonates importer (TC 3.A.1.9.1) family. As to quaternary structure, the complex is composed of two ATP-binding proteins (PhnC), two transmembrane proteins (PhnE) and a solute-binding protein (PhnD).

The protein localises to the cell membrane. It carries out the reaction phosphonate(out) + ATP + H2O = phosphonate(in) + ADP + phosphate + H(+). Functionally, part of the ABC transporter complex PhnCDE involved in phosphonates import. Responsible for energy coupling to the transport system. The polypeptide is Phosphonates import ATP-binding protein PhnC (Lactococcus lactis subsp. lactis (strain IL1403) (Streptococcus lactis)).